Consider the following 178-residue polypeptide: CASP-like protein 5B1 (178 aa).

Topologically, residues 1-37 (MDASNPIVHPIGDHHAVDLEEGPLIVTMKELPGMPGT) are cytoplasmic. The chain crosses the membrane as a helical span at residues 38-58 (IGGLALRVGQFLFAAAAIVIM). Over 59–69 (VTGDEFTNYTA) the chain is Extracellular. A glycan (N-linked (GlcNAc...) asparagine) is linked at Asn-66. A helical transmembrane segment spans residues 70–90 (FCYLVAAMSLQFLWSFMLAIL). The Cytoplasmic portion of the chain corresponds to 91-104 (DTYALLIKRGLRNS). The chain crosses the membrane as a helical span at residues 105-125 (VLLSLFVVGDWVTATLSLAAA). The Extracellular portion of the chain corresponds to 126-154 (CSTAGVTVLFDNDLNYCGQMHCHRYQLSA). Residues 155-175 (AMAFLSWLLIGMSSLLTFWLW) traverse the membrane as a helical segment. At 176–178 (ASE) the chain is on the cytoplasmic side.

It belongs to the Casparian strip membrane proteins (CASP) family. In terms of assembly, homodimer and heterodimers.

It is found in the cell membrane. The protein is CASP-like protein 5B1 of Ginkgo biloba (Ginkgo).